Here is a 265-residue protein sequence, read N- to C-terminus: Mlc titration factor A (265 aa).

Zn(2+)-binding residues include histidine 111, histidine 148, histidine 152, and glutamate 211.

Belongs to the MtfA family. Interacts with Mlc. Requires Zn(2+) as cofactor.

Its subcellular location is the cytoplasm. Involved in the modulation of the activity of the glucose-phosphotransferase system (glucose-PTS). Interacts with the transcriptional repressor Mlc, preventing its interaction with DNA and leading to the modulation of expression of genes regulated by Mlc, including ptsG, which encodes the PTS system glucose-specific EIICB component. In terms of biological role, shows zinc-dependent metallopeptidase activity. The sequence is that of Mlc titration factor A from Shigella dysenteriae serotype 1 (strain Sd197).